A 267-amino-acid chain; its full sequence is Hydroxyethylthiazole kinase 2 (267 aa).

Substrate is bound at residue Met-41. ATP-binding residues include Lys-116 and Thr-166. Residue Gly-193 coordinates substrate.

Belongs to the Thz kinase family. Mg(2+) is required as a cofactor.

The catalysed reaction is 5-(2-hydroxyethyl)-4-methylthiazole + ATP = 4-methyl-5-(2-phosphooxyethyl)-thiazole + ADP + H(+). It participates in cofactor biosynthesis; thiamine diphosphate biosynthesis; 4-methyl-5-(2-phosphoethyl)-thiazole from 5-(2-hydroxyethyl)-4-methylthiazole: step 1/1. Its function is as follows. Catalyzes the phosphorylation of the hydroxyl group of 4-methyl-5-beta-hydroxyethylthiazole (THZ). The chain is Hydroxyethylthiazole kinase 2 from Streptococcus pneumoniae (strain JJA).